A 269-amino-acid polypeptide reads, in one-letter code: HTH-type transcriptional activator ArnR (269 aa).

Residues 1–218 (MTKSLFDVLK…LLRLTNSYTL (218 aa)) are Cytoplasmic-facing. Positions 39 to 62 (TTEISQTINTSRKSIIDAIRKLVD) form a DNA-binding region, H-T-H motif. The helical transmembrane segment at 219–239 (EMANVKVMGFILISLPLLMYF) threads the bilayer. Residues 240 to 242 (RDQ) lie on the Extracellular side of the membrane. Residues 243 to 263 (LGLIELPWLYAVIFLALLSVF) traverse the membrane as a helical segment. Residues 264 to 269 (AQILSR) are Cytoplasmic-facing.

Its subcellular location is the cell membrane. Involved in regulation of archaellar gene expression. Activates flaB transcription upon nutrient starvation by acting on the flaB promoter. This is HTH-type transcriptional activator ArnR from Sulfolobus acidocaldarius (strain ATCC 33909 / DSM 639 / JCM 8929 / NBRC 15157 / NCIMB 11770).